The following is a 739-amino-acid chain: MEHTYQYAWIIPFLPFPVTISIGLGLLLVPTATKNLRRIWAFFSVLLLSIAMVFSADLAIQQINGSFIYQYSWSWTINNTFSLEFGYLIDPLTSIMLILITTVGIMVLIYSDNYMSHDQGYLRFFAYMSFFNTSMLGLVTSSNLIQIYIFWELVGMCSYLLIGFWFTRPTAANACQKAFVTNRVGDFGLLLGILGLYWITGSFEFRDLFEILKNLIHNNEVNSLFAALCASLLFVGAVAKSAQFPLHVWLPDAMEGPTPISALIHAATMVAAGIFLVARLLPLFTVIPYIMNFISLIGIITVLLGATLALAQRDIKRSLAYSTMSQLGYIMLAPGIGSYRAALFHLITHAYSKALLFLGSGSIIHSMEPIVGYSPEKSQNMILMGGLRRYVPITKTTFFLGTLSLCGMPPLACFWSKDEILNDTWLYSPIFAIIAWSTAGLTAFYMFRVYLLTFDGHLQVHFQNFSSTKNSSFYSISIWGKEVPKPLNVNLFLSTMNTNEKMSFFSKNTYQIDRNGKNRIRYFSTQFGNKYTSMYPHESDNTMLFPMLVLVLFTLFIGFIGIPFDQGVIDLDILSKWLTPSINLLHSNSGDSFDWYEFVTNAIYSVTISFLGIFLAYIFYGSVYSSFQNLDLINSFVRIDSKRILSDRIINGIYNWSYNRGYIDVFYGKVLSNTIRGLAELIHFFDRRVIDGITNGVGVVSFFVGEGIKSVGGGRISSYIFLYAFSVSICLIIYYFFSF.

16 consecutive transmembrane segments (helical) span residues 9–29, 39–59, 89–109, 125–145, 147–167, 185–205, 224–244, 258–278, 280–300, 327–347, 354–374, 396–416, 425–445, 544–564, 603–623, and 719–739; these read WIIPFLPFPVTISIGLGLLLV, IWAFFSVLLLSIAMVFSADLA, IDPLTSIMLILITTVGIMVLI, FAYMSFFNTSMLGLVTSSNLI, IYIFWELVGMCSYLLIGFWFT, GDFGLLLGILGLYWITGSFEF, LFAALCASLLFVGAVAKSAQF, TPISALIHAATMVAAGIFLVA, LLPLFTVIPYIMNFISLIGII, LGYIMLAPGIGSYRAALFHLI, ALLFLGSGSIIHSMEPIVGYS, TTFFLGTLSLCGMPPLACFWS, WLYSPIFAIIAWSTAGLTAFY, LFPMLVLVLFTLFIGFIGIPF, IYSVTISFLGIFLAYIFYGSV, and YIFLYAFSVSICLIIYYFFSF.

Belongs to the complex I subunit 5 family. NDH is composed of at least 16 different subunits, 5 of which are encoded in the nucleus.

The protein localises to the plastid. Its subcellular location is the chloroplast thylakoid membrane. It carries out the reaction a plastoquinone + NADH + (n+1) H(+)(in) = a plastoquinol + NAD(+) + n H(+)(out). The enzyme catalyses a plastoquinone + NADPH + (n+1) H(+)(in) = a plastoquinol + NADP(+) + n H(+)(out). Its function is as follows. NDH shuttles electrons from NAD(P)H:plastoquinone, via FMN and iron-sulfur (Fe-S) centers, to quinones in the photosynthetic chain and possibly in a chloroplast respiratory chain. The immediate electron acceptor for the enzyme in this species is believed to be plastoquinone. Couples the redox reaction to proton translocation, and thus conserves the redox energy in a proton gradient. The protein is NAD(P)H-quinone oxidoreductase subunit 5, chloroplastic (ndhF) of Acorus calamus var. americanus (American sweet flag).